Reading from the N-terminus, the 231-residue chain is Venom allergen 3 homolog (231 aa).

The signal sequence occupies residues 1-21 (MSSCMLFFTVIIAGVFMGTIA). 3 disulfides stabilise this stretch: cysteine 25/cysteine 40, cysteine 30/cysteine 124, and cysteine 51/cysteine 117. Positions 68–215 (VTLHNQLRRK…WNQQYLVCNY (148 aa)) constitute an SCP domain. N-linked (GlcNAc...) asparagine glycosylation occurs at asparagine 145. Cysteines 196 and 213 form a disulfide.

The protein belongs to the CRISP family. Expressed by the venom gland.

The protein localises to the secreted. The sequence is that of Venom allergen 3 homolog from Dinoponera quadriceps (South American ant).